Here is a 305-residue protein sequence, read N- to C-terminus: UDP-3-O-acyl-N-acetylglucosamine deacetylase (305 aa).

3 residues coordinate Zn(2+): His-79, His-238, and Asp-242. Residue His-265 is the Proton donor of the active site.

The protein belongs to the LpxC family. Zn(2+) is required as a cofactor.

The catalysed reaction is a UDP-3-O-[(3R)-3-hydroxyacyl]-N-acetyl-alpha-D-glucosamine + H2O = a UDP-3-O-[(3R)-3-hydroxyacyl]-alpha-D-glucosamine + acetate. The protein operates within glycolipid biosynthesis; lipid IV(A) biosynthesis; lipid IV(A) from (3R)-3-hydroxytetradecanoyl-[acyl-carrier-protein] and UDP-N-acetyl-alpha-D-glucosamine: step 2/6. Catalyzes the hydrolysis of UDP-3-O-myristoyl-N-acetylglucosamine to form UDP-3-O-myristoylglucosamine and acetate, the committed step in lipid A biosynthesis. The chain is UDP-3-O-acyl-N-acetylglucosamine deacetylase from Proteus mirabilis (strain HI4320).